The following is a 409-amino-acid chain: Nucleoprotein (409 aa).

Disordered regions lie at residues 1–32 (MASG…SSGN), 44–69 (LNSP…QQHG), 121–194 (ADVK…GSED), and 238–259 (VDQV…DKMN). Residues 29-160 (SSGNASWFQA…GNFRWDFIPL (132 aa)) are RNA-binding. Residues 31 to 156 (GNASWFQAIK…GGPDGNFRWD (126 aa)) form the CoV N NTD domain. The span at 162-179 (RGRSGRSTAASSAASSRP) shows a compositional bias: low complexity. Composition is skewed to basic and acidic residues over residues 180-192 (PSRE…RSGS) and 247-259 (KGKE…DKMN). Residues S190 and S192 each carry the phosphoserine; by host modification. The 117-residue stretch at 215–331 (TKAKADEMAH…QCVDGVGTRP (117 aa)) folds into the CoV N CTD domain. The dimerization stretch occupies residues 226–333 (RYCKRTIPPG…VDGVGTRPKD (108 aa)). C320 and C323 form a disulfide bridge. The disordered stretch occupies residues 326–409 (GVGTRPKDDE…GDSALGENEL (84 aa)). Residues 341 to 356 (RSSSRPATRTSSPAPR) are compositionally biased toward low complexity. The segment covering 358–367 (QRLKKEKRPK) has biased composition (basic residues). The segment covering 368-384 (KQDDEVDKALTSDEERN) has biased composition (basic and acidic residues). At T378 the chain carries Phosphothreonine; by host. S379 is modified (phosphoserine; by host).

This sequence belongs to the gammacoronavirus nucleocapsid protein family. Homooligomer. Both monomeric and oligomeric forms interact with RNA. Interacts with protein M. Interacts with NSP3; this interaction serves to tether the genome to the newly translated replicase-transcriptase complex at a very early stage of infection. In terms of processing, ADP-ribosylated. The ADP-ribosylation is retained in the virion during infection. Phosphorylated on serine and threonine residues.

It is found in the virion. Its subcellular location is the host endoplasmic reticulum-Golgi intermediate compartment. The protein localises to the host Golgi apparatus. Its function is as follows. Packages the positive strand viral genome RNA into a helical ribonucleocapsid (RNP) and plays a fundamental role during virion assembly through its interactions with the viral genome and membrane protein M. Plays an important role in enhancing the efficiency of subgenomic viral RNA transcription as well as viral replication. In Gallus gallus (Chicken), this protein is Nucleoprotein.